The chain runs to 217 residues: MOB kinase activator 3A (217 aa).

Residues C83, C88, H165, and H170 each coordinate Zn(2+).

The protein belongs to the MOB1/phocein family.

Functionally, may regulate the activity of kinases. This is MOB kinase activator 3A (MOB3A) from Homo sapiens (Human).